The following is a 476-amino-acid chain: Acyl-lipid omega-13 desaturase (476 aa).

The 66-residue stretch at G10–V75 folds into the Cytochrome b5 heme-binding domain. H37 and H60 together coordinate heme. 2 helical membrane-spanning segments follow: residues P146–W166 and G168–V188. Residues H189–H193 carry the Histidine box-1 motif. The short motif at H224–H229 is the Histidine box-2 element. 3 helical membrane-spanning segments follow: residues F267 to L287, Y315 to L335, and L343 to V363. Positions Q410–H414 match the Histidine box-3 motif.

The protein belongs to the fatty acid desaturase type 1 family.

Its subcellular location is the membrane. The catalysed reaction is a (9Z,12Z)-octadecadienoyl-containing glycerolipid + 2 Fe(II)-[cytochrome b5] + O2 + 2 H(+) = a (5Z,9Z,12Z)-octadecatrienoyl-containing glycerolipid + 2 Fe(III)-[cytochrome b5] + 2 H2O. The enzyme catalyses (9Z,12Z,15Z)-octadecatrienoyl-containing glycerolipid + 2 Fe(II)-[cytochrome b5] + O2 + 2 H(+) = a (5Z,9Z,12Z,15Z)-octadecatetraenoyl-containing glycerolipid + 2 Fe(III)-[cytochrome b5] + 2 H2O. Its pathway is lipid metabolism; polyunsaturated fatty acid biosynthesis. Front-end desaturase having a omega-13 desaturase activity for omega-9 unsaturated C18/C20 fatty acids. Strong substrate preferences for linoleic acid and alpha-linolenic acid for the production of pinolenic and coniferonic acids respectively. No desaturase activity for dihomo gamma-linolenic acid and eicosatertraenoic acid. The sequence is that of Acyl-lipid omega-13 desaturase from Chlamydomonas reinhardtii (Chlamydomonas smithii).